Reading from the N-terminus, the 327-residue chain is GMP reductase (327 aa).

Residue C175 is the Thioimidate intermediate of the active site. 204–227 (IIADGGIRTHGDIAKSIRFGASMV) serves as a coordination point for NADP(+).

Belongs to the IMPDH/GMPR family. GuaC type 2 subfamily.

It carries out the reaction IMP + NH4(+) + NADP(+) = GMP + NADPH + 2 H(+). Functionally, catalyzes the irreversible NADPH-dependent deamination of GMP to IMP. It functions in the conversion of nucleobase, nucleoside and nucleotide derivatives of G to A nucleotides, and in maintaining the intracellular balance of A and G nucleotides. In Exiguobacterium sp. (strain ATCC BAA-1283 / AT1b), this protein is GMP reductase.